Reading from the N-terminus, the 161-residue chain is Nucleotide-binding protein Dtpsy_2240 (161 aa).

This sequence belongs to the YajQ family.

Nucleotide-binding protein. This is Nucleotide-binding protein Dtpsy_2240 from Acidovorax ebreus (strain TPSY) (Diaphorobacter sp. (strain TPSY)).